The primary structure comprises 118 residues: Probable non-functional immunoglobulin lambda variable 2-33 (118 aa).

Residues 1 to 19 (MAWALLLLTLLTQGTGSWA) form the signal peptide. Residues 20–44 (QSALTQPPFVSGAPGQSVTISCTGT) form a framework-1 region. The Ig-like domain maps to 34-118 (GQSVTISCTG…CSLYSSSYTF (85 aa)). Cysteines 41 and 109 form a disulfide. The tract at residues 45–53 (SSDVGDYDH) is complementarity-determining-1. The segment at 54–70 (VFWYQKRLSTTSRLLIY) is framework-2. Positions 71–73 (NVN) are complementarity-determining-2. The tract at residues 74-109 (TRPSGISDLFSGSKSGNMASLTISGLKSEVEANYHC) is framework-3. The tract at residues 110-118 (SLYSSSYTF) is complementarity-determining-3.

As to quaternary structure, immunoglobulins are composed of two identical heavy chains and two identical light chains; disulfide-linked.

The protein localises to the secreted. It is found in the cell membrane. In terms of biological role, probable non-functional open reading frame (ORF) of V region of the variable domain of immunoglobulin light chains. Non-functional ORF generally cannot participate in the synthesis of a productive immunoglobulin chain due to altered V-(D)-J or switch recombination and/or splicing site (at mRNA level) and/or conserved amino acid change (protein level). Immunoglobulins, also known as antibodies, are membrane-bound or secreted glycoproteins produced by B lymphocytes. In the recognition phase of humoral immunity, the membrane-bound immunoglobulins serve as receptors which, upon binding of a specific antigen, trigger the clonal expansion and differentiation of B lymphocytes into immunoglobulins-secreting plasma cells. Secreted immunoglobulins mediate the effector phase of humoral immunity, which results in the elimination of bound antigens. The antigen binding site is formed by the variable domain of one heavy chain, together with that of its associated light chain. Thus, each immunoglobulin has two antigen binding sites with remarkable affinity for a particular antigen. The variable domains are assembled by a process called V-(D)-J rearrangement and can then be subjected to somatic hypermutations which, after exposure to antigen and selection, allow affinity maturation for a particular antigen. The sequence is that of Probable non-functional immunoglobulin lambda variable 2-33 from Homo sapiens (Human).